Reading from the N-terminus, the 256-residue chain is Hydroxyacylglutathione hydrolase (256 aa).

7 residues coordinate Zn(2+): H56, H58, D60, H61, H114, D133, and H171.

It belongs to the metallo-beta-lactamase superfamily. Glyoxalase II family. As to quaternary structure, monomer. Zn(2+) serves as cofactor.

It catalyses the reaction an S-(2-hydroxyacyl)glutathione + H2O = a 2-hydroxy carboxylate + glutathione + H(+). The protein operates within secondary metabolite metabolism; methylglyoxal degradation; (R)-lactate from methylglyoxal: step 2/2. Thiolesterase that catalyzes the hydrolysis of S-D-lactoyl-glutathione to form glutathione and D-lactic acid. This chain is Hydroxyacylglutathione hydrolase, found in Rhodobacter capsulatus (Rhodopseudomonas capsulata).